A 341-amino-acid chain; its full sequence is Methionine import ATP-binding protein MetN (341 aa).

The region spanning 2–237 (IELCGLKKSF…PESLARKMLY (236 aa)) is the ABC transporter domain. Position 34 to 41 (34 to 41 (GKSGAGKS)) interacts with ATP.

This sequence belongs to the ABC transporter superfamily. Methionine importer (TC 3.A.1.24) family. In terms of assembly, the complex is composed of two ATP-binding proteins (MetN), two transmembrane proteins (MetI) and a solute-binding protein (MetQ).

The protein localises to the cell inner membrane. It carries out the reaction L-methionine(out) + ATP + H2O = L-methionine(in) + ADP + phosphate + H(+). The enzyme catalyses D-methionine(out) + ATP + H2O = D-methionine(in) + ADP + phosphate + H(+). Functionally, part of the ABC transporter complex MetNIQ involved in methionine import. Responsible for energy coupling to the transport system. The sequence is that of Methionine import ATP-binding protein MetN from Legionella pneumophila (strain Lens).